Reading from the N-terminus, the 68-residue chain is Large ribosomal subunit protein bL35 (68 aa).

The protein belongs to the bacterial ribosomal protein bL35 family.

This chain is Large ribosomal subunit protein bL35, found in Rickettsia typhi (strain ATCC VR-144 / Wilmington).